We begin with the raw amino-acid sequence, 845 residues long: Protein SPA1-RELATED 3 (845 aa).

Positions 1 to 19 (MEGSSNSNSRGFNTSGVSD) are enriched in polar residues. Disordered regions lie at residues 1–33 (MEGSSNSNSRGFNTSGVSDRNTEFLPVERLTTR) and 139–158 (CSDSGSDSLEDGPISQKEIG). In terms of domain architecture, Protein kinase spans 1–297 (MEGSSNSNSR…MSDLLQSEFI (297 aa)). Residues 301–329 (RDNLEEREAAIELRDRIEEQESLLEFLLL) adopt a coiled-coil conformation. WD repeat units lie at residues 532–571 (NSSNLVCALAFDREGELFATAGVNKKIKIFECNSIVNDNR), 581–621 (AGRS…LVTE), 624–664 (EHKK…SIGT), 666–706 (KTKA…IPLC), 710–748 (GHSKTVSYVKFVDSSTLVSSSTDNTLKLWDLSMSASGIN), 757–796 (GHTNLKNFVGLSVSDGYIATGSETNEVFVYHKAFPMPVMS), and 812–845 (DASQFISSICWRGQSSTLVAANSNGNIKILEMMT). Residues 685–699 (AFGSADHKVYYYDLR) carry the DWD box motif.

Interacts with COP1 and CO.

Its subcellular location is the nucleus. Functionally, repressor of photomorphogenesis in the light. Probably part of the COP1/SPA E3 ubiquitin-protein ligase complex. The chain is Protein SPA1-RELATED 3 (SPA3) from Arabidopsis thaliana (Mouse-ear cress).